The following is a 277-amino-acid chain: Uracil phosphoribosyltransferase homolog (277 aa).

The segment at 1–69 (MEAMPCHNQR…AAAPSPAAED (69 aa)) is disordered. Positions 37 to 69 (AEPSEGSSSGSPSPDSSSGSNGAAAAPSPAAED) are enriched in low complexity. Residues Arg-101, Arg-110, and 144 to 147 (EKGN) contribute to the GTP site. Residue Arg-154 participates in 5-phospho-alpha-D-ribose 1-diphosphate binding. GTP is bound by residues Arg-171 and Arg-200. Residue 206–214 (YPILSTGNT) coordinates 5-phospho-alpha-D-ribose 1-diphosphate. Position 267 to 269 (267 to 269 (THF)) interacts with uracil.

It belongs to the UPRTase family.

It localises to the cytoplasm. The protein resides in the nucleus. This is Uracil phosphoribosyltransferase homolog (UPRT) from Gallus gallus (Chicken).